The primary structure comprises 435 residues: S-phase entry cyclin-5 (435 aa).

Disordered stretches follow at residues 36-70 and 104-126; these read KRAL…NPLS and NDRT…DAAS. The segment covering 41-52 has biased composition (low complexity); it reads KNDSSSKQQVQD. Over residues 110–124 the composition is skewed to acidic residues; that stretch reads EQEEEEEEEGEDDDA.

This sequence belongs to the cyclin family. Cyclin AB subfamily.

Required for efficient progression through S phase and possibly for the normal progression through meiosis. Interacts with CDC28. The chain is S-phase entry cyclin-5 (CLB5) from Saccharomyces cerevisiae (strain ATCC 204508 / S288c) (Baker's yeast).